The primary structure comprises 443 residues: MAEQRGNMLMKKYEMGKLLGQGTFAKVYHARNTETSESVAIKMIDKEKVLKGGLMDQIKREISVMKLVRHPNIVQLYEVMATKTKIYFVLEHVKGGELFNKVQRGRLKEDAARKYFQQLICAVDFCHSRGVYHRDLKPENLLLDENSNLKVSDFGLSALADCKRQDGLLHTTCGTPAYVAPEVINRRGYDGAKADIWSCGVILFVLLAGYLPFHDKNLMDMYKKIGKAEFKCPSWFNTDVRRLLLRILDPNPSTRISMDKIMENPWFRKGLDAKLLRYNLQPKDAIPVDMSTDFDSFNSAPTLEKKPSNLNAFDIISLSTGLDLSGMFEESDKKESKFTSTSTASTIISKIEDIAKGLRLKLTKKDGGLLKMEGSKPGRKGVMGIDAEIFEVTPNFHLVELKKTNGDTLEYRKVLNQEMRPALKDIVWAWQGEQPKQQQQPTC.

In terms of domain architecture, Protein kinase spans 13–267; the sequence is YEMGKLLGQG…MDKIMENPWF (255 aa). Residues 19–27 and lysine 42 each bind ATP; that span reads LGQGTFAKV. Aspartate 135 serves as the catalytic Proton acceptor. An activation loop region spans residues 153-182; sequence DFGLSALADCKRQDGLLHTTCGTPAYVAPE. The NAF domain occupies 302-329; that stretch reads TLEKKPSNLNAFDIISLSTGLDLSGMFE. The tract at residues 333–362 is PPI; sequence KKESKFTSTSTASTIISKIEDIAKGLRLKL.

The protein belongs to the protein kinase superfamily. CAMK Ser/Thr protein kinase family. SNF1 subfamily. Requires Mn(2+) as cofactor.

The enzyme catalyses L-seryl-[protein] + ATP = O-phospho-L-seryl-[protein] + ADP + H(+). The catalysed reaction is L-threonyl-[protein] + ATP = O-phospho-L-threonyl-[protein] + ADP + H(+). CIPK serine-threonine protein kinases interact with CBL proteins. Binding of a CBL protein to the regulatory NAF domain of CIPK protein lead to the activation of the kinase in a calcium-dependent manner. The protein is CBL-interacting protein kinase 2 (CIPK2) of Oryza sativa subsp. japonica (Rice).